The sequence spans 391 residues: Shewanella-like protein phosphatase 2 (391 aa).

Mn(2+) is bound by residues D61, H63, D97, and N132. H133 (proton donor) is an active-site residue. 2 residues coordinate Mn(2+): H232 and H295.

Belongs to the metallophosphoesterase superfamily. SLP family. It depends on Mn(2+) as a cofactor. In terms of tissue distribution, expressed in roots and siliques (at protein level).

The protein localises to the cytoplasm. It localises to the cytosol. In terms of biological role, shows phosphatase activity, hydrolyzing the artificial substrate para-nitrophenylphosphate (pNPP) in vitro. In Arabidopsis thaliana (Mouse-ear cress), this protein is Shewanella-like protein phosphatase 2.